The sequence spans 593 residues: ETS-related transcription factor Elf-2 (593 aa).

Ser-107 is modified (phosphoserine). Residues 146–201 (VEVSTEESEPMDTSPIPTSPDSHEPMKKKKVGRKPKTQQSPISNGSPELGIKKKPR) are disordered. The span at 171 to 181 (MKKKKVGRKPK) shows a compositional bias: basic residues. A Phosphothreonine modification is found at Thr-182. Over residues 182–191 (TQQSPISNGS) the composition is skewed to polar residues. 2 positions are modified to phosphoserine: Ser-185 and Ser-191. A DNA-binding region (ETS) is located at residues 208-290 (TYLWEFLLDL…EGQRLVYQFK (83 aa)). Ser-363 and Ser-372 each carry phosphoserine. Thr-376 carries the post-translational modification Phosphothreonine. The residue at position 430 (Ser-430) is a Phosphoserine. Arg-494 is subject to Omega-N-methylarginine. At Thr-521 the chain carries Phosphothreonine. Lys-536 is covalently cross-linked (Glycyl lysine isopeptide (Lys-Gly) (interchain with G-Cter in SUMO2)).

It belongs to the ETS family. As to quaternary structure, interacts with the LIM domains of LMO2. Interacts via its N-terminal region with RUNX1. In terms of tissue distribution, expressed in all fetal and adult tissues examined. Among fetal tissues, highest levels of expression detected in heart, lung, liver and kidney, and lower levels in brain. Among adult tissues, highest levels of expression detected in heart, placenta, lung, skeletal muscle, spleen, thymus, testis and ovary. Moderate expression in prostate, small intestine, kidney, liver and pancreas, and weak expression in colon, brain and peripheral blood lymphocytes.

The protein resides in the nucleus. Functionally, isoform 1 transcriptionally activates the LYN and BLK promoters and acts synergistically with RUNX1 to transactivate the BLK promoter. Its function is as follows. Isoform 2 may function in repression of RUNX1-mediated transactivation. The chain is ETS-related transcription factor Elf-2 from Homo sapiens (Human).